The following is a 211-amino-acid chain: Metalloproteinase inhibitor 3 (211 aa).

An N-terminal signal peptide occupies residues 1–23 (MTPWLGLIVLLGSWSLGDWGAEA). Position 24 (cysteine 24) interacts with Zn(2+). Involved in metalloproteinase-binding stretches follow at residues 24–27 (CTCS) and 88–89 (ES). Disulfide bonds link cysteine 24–cysteine 91, cysteine 26–cysteine 118, cysteine 36–cysteine 143, cysteine 145–cysteine 192, cysteine 150–cysteine 155, and cysteine 163–cysteine 184. The 120-residue stretch at 24–143 (CTCSPSHPQD…GLNYRYHLGC (120 aa)) folds into the NTR domain. The mediates interaction with EFEMP1 stretch occupies residues 105–188 (TGRVYDGKMY…SKHYACIRQK (84 aa)). Asparagine 207 carries N-linked (GlcNAc...) asparagine glycosylation.

The protein belongs to the protease inhibitor I35 (TIMP) family. Interacts with EFEMP1. Interacts with KDR.

The protein localises to the secreted. It is found in the extracellular space. Its subcellular location is the extracellular matrix. Functionally, mediates a variety of processes including matrix regulation and turnover, inflammation, and angiogenesis, through reversible inhibition of zinc protease superfamily enzymes, primarily matrix metalloproteinases (MMPs). Regulates extracellular matrix (ECM) remodeling through inhibition of matrix metalloproteinases (MMP) including MMP-1, MMP-2, MMP-3, MMP-7, MMP-9, MMP-13, MMP-14 and MMP-15. Additionally, modulates the processing of amyloid precursor protein (APP) and apolipoprotein E receptor ApoER2 by inhibiting two alpha-secretases ADAM10 and ADAM17. Functions as a tumor suppressor and a potent inhibitor of angiogenesis. Exerts its anti-angiogenic effect by directly interacting with vascular endothelial growth factor (VEGF) receptor-2/KDR, preventing its binding to the VEGFA ligand. Selectively induces apoptosis in angiogenic endothelial cells through a caspase-independent cell death pathway. Mechanistically, inhibits matrix-induced focal adhesion kinase PTK2 tyrosine phosphorylation and association with paxillin/PXN and disrupts the incorporation of ITGB3, PTK2 and PXN into focal adhesion contacts on the matrix. This is Metalloproteinase inhibitor 3 (TIMP3) from Macaca mulatta (Rhesus macaque).